The primary structure comprises 633 residues: Chitin synthase regulatory factor 4 (633 aa).

A disordered region spans residues 121-151 (ATSSQETKRDRPLPNIRNSAPSATRSHSTPC). Polar residues predominate over residues 136 to 149 (IRNSAPSATRSHST). Ser-148 is subject to Phosphoserine. 5 Sel1-like repeats span residues 278–314 (AKAMYFDAYVYETGAFDVESDIQRAWDLYSSSANLGY), 315–346 (TRSLYRLGVLLEDQGNLEEAVEYFEKGVSEND), 438–474 (SSAQLRMGAVYEFGKYGCPVVPRYSLFYYSAAAKRGE), 475–511 (TEADLAVAKWYLNGSDGIPVDEDLAFMHAERASMAGN), and 512–543 (ANAQFLMGYLFDTRGNTEQATYWYNEAAKAGH). Residues 583–613 (ASETSPPHAPAVSSTPVTSAPPVSQTKVTKV) are disordered. The segment covering 592–613 (PAVSSTPVTSAPPVSQTKVTKV) has biased composition (low complexity).

It localises to the cytoplasm. Its function is as follows. Involved in septum formation. Required for the proper localization of chs2 at the septum. The protein is Chitin synthase regulatory factor 4 (chr4) of Schizosaccharomyces pombe (strain 972 / ATCC 24843) (Fission yeast).